Reading from the N-terminus, the 370-residue chain is Serine/threonine-protein kinase RIM11/MSD1 (370 aa).

Residues 39–322 enclose the Protein kinase domain; the sequence is FPTTEVVGHG…ALQCLCSPYF (284 aa). Residues 45-53 and Lys68 each bind ATP; that span reads VGHGSFGVV. The active-site Proton acceptor is Asp164. Tyr199 is subject to Phosphotyrosine.

Belongs to the protein kinase superfamily. CMGC Ser/Thr protein kinase family. GSK-3 subfamily. Interacts with TDA1.

It catalyses the reaction L-seryl-[protein] + ATP = O-phospho-L-seryl-[protein] + ADP + H(+). It carries out the reaction L-threonyl-[protein] + ATP = O-phospho-L-threonyl-[protein] + ADP + H(+). In terms of biological role, serine/threonine protein kinase that is thought to function in regulating kinetochore activity and entry into meiosis. Could phosphorylate IME1. The chain is Serine/threonine-protein kinase RIM11/MSD1 (RIM11) from Saccharomyces cerevisiae (strain ATCC 204508 / S288c) (Baker's yeast).